Consider the following 211-residue polypeptide: Large ribosomal subunit protein bL25 (211 aa).

The disordered stretch occupies residues 185–211; that stretch reads ESTTPAATEGEETEAAAAAPEPAAEDK. A compositionally biased stretch (low complexity) spans 199–211; that stretch reads AAAAAPEPAAEDK.

This sequence belongs to the bacterial ribosomal protein bL25 family. CTC subfamily. In terms of assembly, part of the 50S ribosomal subunit; part of the 5S rRNA/L5/L18/L25 subcomplex. Contacts the 5S rRNA. Binds to the 5S rRNA independently of L5 and L18.

In terms of biological role, this is one of the proteins that binds to the 5S RNA in the ribosome where it forms part of the central protuberance. This chain is Large ribosomal subunit protein bL25, found in Treponema denticola (strain ATCC 35405 / DSM 14222 / CIP 103919 / JCM 8153 / KCTC 15104).